A 196-amino-acid polypeptide reads, in one-letter code: DnaA initiator-associating protein DiaA (196 aa).

The SIS domain maps to 34-196; the sequence is LVQSLLNGNK…DNTLFPHQDD (163 aa).

It belongs to the SIS family. DiaA subfamily. As to quaternary structure, homotetramer; dimer of dimers.

In terms of biological role, required for the timely initiation of chromosomal replication via direct interactions with the DnaA initiator protein. In Shigella boydii serotype 18 (strain CDC 3083-94 / BS512), this protein is DnaA initiator-associating protein DiaA.